Reading from the N-terminus, the 230-residue chain is Transmembrane 4 L6 family member 20 (230 aa).

Over Met-1–Asn-11 the chain is Lumenal. Residues Gly-12–Leu-32 form a helical membrane-spanning segment. The Cytoplasmic portion of the chain corresponds to Asn-33–Pro-44. Residues Ile-45–Ala-65 form a helical membrane-spanning segment. The Lumenal segment spans residues Thr-66–Gly-83. Residues Met-84–Val-104 traverse the membrane as a helical segment. Over Ser-105–Arg-185 the chain is Cytoplasmic. Residues Ile-186–Gly-206 form a helical membrane-spanning segment. Over Leu-207 to Val-230 the chain is Lumenal.

It belongs to the L6 tetraspanin family. Post-translationally, glycosylated at Asn-132 in presence of ceramide which inverts the orientation of TM4SF20 in membranes exposing these residues to the endoplasmic reticulum lumen. In terms of processing, cleaved by signal peptidase at Ser-14 but the peptide does not act as a signal peptide. Cleavage is inhibited by ceramide which inverts the orientation of TM4SF20 in membranes exposing the N-terminus to the cytosol and not to the endoplasmic reticulum lumen.

It is found in the membrane. The protein localises to the endoplasmic reticulum membrane. Polytopic transmembrane protein. Inhibits regulated intramembrane proteolysis (RIP) of CREB3L1, inhibiting its activation and the induction of collagen synthesis. In response to ceramide, which alters TM4SF20 membrane topology, stimulates RIP activation of CREB3L1. Ceramide reverses the direction through which transmembrane helices are translocated into the endoplasmic reticulum membrane during translation of TM4SF20, this mechanism is called 'regulated alternative translocation' (RAT) and regulates the function of the transmembrane protein. The protein is Transmembrane 4 L6 family member 20 (TM4SF20) of Bos taurus (Bovine).